The following is a 301-amino-acid chain: N-acetylmuramic acid 6-phosphate etherase (301 aa).

The 164-residue stretch at Thr-57–Lys-220 folds into the SIS domain. Glu-85 acts as the Proton donor in catalysis. Glu-116 is a catalytic residue.

The protein belongs to the GCKR-like family. MurNAc-6-P etherase subfamily. As to quaternary structure, homodimer.

The catalysed reaction is N-acetyl-D-muramate 6-phosphate + H2O = N-acetyl-D-glucosamine 6-phosphate + (R)-lactate. It functions in the pathway amino-sugar metabolism; N-acetylmuramate degradation. Specifically catalyzes the cleavage of the D-lactyl ether substituent of MurNAc 6-phosphate, producing GlcNAc 6-phosphate and D-lactate. This chain is N-acetylmuramic acid 6-phosphate etherase, found in Clostridium botulinum (strain Eklund 17B / Type B).